Consider the following 642-residue polypeptide: Aryl hydrocarbon receptor nuclear translocator homolog (642 aa).

The region spanning 13-66 (ASRENHCEIERRRRNKMTAYITELSDMVPTCSALARKPDKLTILRMAVAHMKAL) is the bHLH domain. 2 consecutive PAS domains span residues 85–156 (DQEL…ESQN) and 271–341 (TAAN…LKQK). Positions 346–389 (SLLYRARAKNSEYVWLRTQAYAFLNPYTDEVEYIVCTNSSGKTM) constitute a PAC domain. Residues 450-612 (QAPTPQQQQQ…GPAGAGQPQG (163 aa)) form a disordered region. Polar residues-rich tracts occupy residues 463–482 (RPGSAQTTPVGYTYDTTHSP) and 528–554 (YQYQQTSPARSPSGPTYTQLSAGNGNR). The segment covering 555–564 (QQAQPGAYQA) has biased composition (low complexity).

Efficient DNA binding requires dimerization with another bHLH protein. Heterodimer with ahr, trh or sim. In terms of tissue distribution, at stage 11, expression is detected in tracheal pits. At later stages, strong expression is also detected in the CNS.

It is found in the nucleus. Its function is as follows. Heterodimers of tgo/trh are involved in the control of breathless expression. Plays a role in the cellular or tissue response to oxygen deprivation. The sequence is that of Aryl hydrocarbon receptor nuclear translocator homolog (tgo) from Drosophila melanogaster (Fruit fly).